The primary structure comprises 138 residues: Endoribonuclease YbeY (138 aa).

Zn(2+) is bound by residues H98, H102, and H108.

Belongs to the endoribonuclease YbeY family. It depends on Zn(2+) as a cofactor.

The protein localises to the cytoplasm. Functionally, single strand-specific metallo-endoribonuclease involved in late-stage 70S ribosome quality control and in maturation of the 3' terminus of the 16S rRNA. This Thermosipho melanesiensis (strain DSM 12029 / CIP 104789 / BI429) protein is Endoribonuclease YbeY.